A 103-amino-acid polypeptide reads, in one-letter code: Large ribosomal subunit protein eL14 (103 aa).

Belongs to the eukaryotic ribosomal protein eL14 family.

The protein is Large ribosomal subunit protein eL14 of Pyrobaculum islandicum (strain DSM 4184 / JCM 9189 / GEO3).